We begin with the raw amino-acid sequence, 269 residues long: Tryptophan synthase alpha chain (269 aa).

Catalysis depends on proton acceptor residues E49 and D60.

It belongs to the TrpA family. As to quaternary structure, tetramer of two alpha and two beta chains.

The enzyme catalyses (1S,2R)-1-C-(indol-3-yl)glycerol 3-phosphate + L-serine = D-glyceraldehyde 3-phosphate + L-tryptophan + H2O. It functions in the pathway amino-acid biosynthesis; L-tryptophan biosynthesis; L-tryptophan from chorismate: step 5/5. In terms of biological role, the alpha subunit is responsible for the aldol cleavage of indoleglycerol phosphate to indole and glyceraldehyde 3-phosphate. This chain is Tryptophan synthase alpha chain, found in Photobacterium profundum (strain SS9).